Here is a 314-residue protein sequence, read N- to C-terminus: Malate dehydrogenase (314 aa).

NAD(+) is bound by residues 11–16 (GSGNIG) and D35. 2 residues coordinate substrate: R84 and R90. Residues N97 and 120–122 (ITN) contribute to the NAD(+) site. Substrate is bound by residues N122 and R153. Catalysis depends on H177, which acts as the Proton acceptor.

It belongs to the LDH/MDH superfamily. MDH type 3 family.

The catalysed reaction is (S)-malate + NAD(+) = oxaloacetate + NADH + H(+). Functionally, catalyzes the reversible oxidation of malate to oxaloacetate. This chain is Malate dehydrogenase, found in Rickettsia canadensis (strain McKiel).